The following is a 617-amino-acid chain: Probable Xaa-Pro aminopeptidase P (617 aa).

Residues Asp-414, Asp-425, Glu-523, and Glu-537 each coordinate Mn(2+).

Belongs to the peptidase M24B family. The cofactor is Mn(2+).

It catalyses the reaction Release of any N-terminal amino acid, including proline, that is linked to proline, even from a dipeptide or tripeptide.. In terms of biological role, catalyzes the removal of a penultimate prolyl residue from the N-termini of peptides. In Ajellomyces capsulatus (strain NAm1 / WU24) (Darling's disease fungus), this protein is Probable Xaa-Pro aminopeptidase P (AMPP).